A 22-amino-acid chain; its full sequence is Unknown protein 20 from 2D-PAGE (22 aa).

The sequence is that of Unknown protein 20 from 2D-PAGE from Bombyx mori (Silk moth).